The following is a 597-amino-acid chain: Bile salt-activated lipase (597 aa).

The first 18 residues, 1 to 18, serve as a signal peptide directing secretion; sequence LGASRLGPSPGCLAVASA. An intrachain disulfide couples Cys-82 to Cys-98. N-linked (GlcNAc...) asparagine glycosylation is present at Asn-205. The active-site Acyl-ester intermediate is Ser-212. Cys-264 and Cys-275 form a disulfide bridge. Asp-338 serves as the catalytic Charge relay system. N-linked (GlcNAc...) asparagine glycosylation is present at Asn-379. The active-site Charge relay system is His-453. The interval 553–591 is disordered; the sequence is AGASLLPPEDNSQASPVPPADNSGAPTEPSAGDSEVAQM.

This sequence belongs to the type-B carboxylesterase/lipase family. Interacts with CLC.

It localises to the secreted. The catalysed reaction is a triacylglycerol + H2O = a diacylglycerol + a fatty acid + H(+). It catalyses the reaction 1,2,3-tri-(9Z-octadecenoyl)-glycerol + H2O = di-(9Z)-octadecenoylglycerol + (9Z)-octadecenoate + H(+). The enzyme catalyses 1,2,3-trioctanoylglycerol + H2O = dioctanoylglycerol + octanoate + H(+). It carries out the reaction a sterol ester + H2O = a sterol + a fatty acid + H(+). The catalysed reaction is cholesteryl (9Z-octadecenoate) + H2O = cholesterol + (9Z)-octadecenoate + H(+). It catalyses the reaction an acetyl ester + H2O = an aliphatic alcohol + acetate + H(+). The enzyme catalyses a butanoate ester + H2O = an aliphatic alcohol + butanoate + H(+). It carries out the reaction 9-hexadecanoyloxy-octadecanoate + H2O = 9-hydroxy-octadecanoate + hexadecanoate + H(+). The catalysed reaction is 9-(9Z-octadecenoyloxy)-octadecanoate + H2O = 9-hydroxy-octadecanoate + (9Z)-octadecenoate + H(+). It catalyses the reaction 1-hexadecanoyl-sn-glycero-3-phosphocholine + H2O = sn-glycerol 3-phosphocholine + hexadecanoate + H(+). The enzyme catalyses 12-hexadecanoyloxy-octadecanoate + H2O = 12-hydroxyoctadecanoate + hexadecanoate + H(+). It carries out the reaction 12-(9Z-octadecenoyloxy)-octadecanoate + H2O = 12-hydroxyoctadecanoate + (9Z)-octadecenoate + H(+). The catalysed reaction is 13-(9Z-octadecenoyloxy)-octadecanoate + H2O = 13-hydroxy-octadecanoate + (9Z)-octadecenoate + H(+). It catalyses the reaction 9-(9Z-hexadecenoyloxy)-octadecanoate + H2O = (9Z)-hexadecenoate + 9-hydroxy-octadecanoate + H(+). The enzyme catalyses 12-(9Z-hexadecenoyloxy)-octadecanoate + H2O = 12-hydroxyoctadecanoate + (9Z)-hexadecenoate + H(+). It carries out the reaction 13-(9Z-hexadecenoyloxy)-octadecanoate + H2O = 13-hydroxy-octadecanoate + (9Z)-hexadecenoate + H(+). The catalysed reaction is 12-octadecanoyloxy-octadecanoate + H2O = 12-hydroxyoctadecanoate + octadecanoate + H(+). It catalyses the reaction 13-octadecanoyloxy-octadecanoate + H2O = 13-hydroxy-octadecanoate + octadecanoate + H(+). The enzyme catalyses 5-(9Z-hexadecenoyloxy)-octadecanoate + H2O = 5-hydroxy-octadecanoate + (9Z)-hexadecenoate + H(+). It carries out the reaction 9-octadecanoyloxy-octadecanoate + H2O = 9-hydroxy-octadecanoate + octadecanoate + H(+). Its activity is regulated as follows. Activated by bile salts such as sodium taurocholate. In terms of biological role, catalyzes the hydrolysis of a wide range of substrates including cholesteryl esters, phospholipids, lysophospholipids, di- and tri-acylglycerols, and fatty acid esters of hydroxy fatty acids (FAHFA). Preferentially hydrolyzes FAHFAs with the ester bond further away from the carboxylate. Unsaturated FAHFAs are hydrolyzed more quickly than saturated FAHFAs. Has an essential role in the complete digestion of dietary lipids and their intestinal absorption, along with the absorption of fat-soluble vitamins. In Bos taurus (Bovine), this protein is Bile salt-activated lipase (CEL).